The following is a 303-amino-acid chain: Crk-like protein (303 aa).

Residues 14-102 form the SH2 domain; it reads WYMGPVTRQE…LDTTTLIEPA (89 aa). Positions 123–183 constitute an SH3 1 domain; that stretch reads ENLEYVRTLY…PVPYVEKLVR (61 aa). Y127 is modified (phosphotyrosine). Residues 184 to 203 are disordered; the sequence is SSPHGKHGNRNSNSYGIPEP. Y207 bears the Phosphotyrosine mark. One can recognise an SH3 2 domain in the interval 235 to 296; it reads NGPVFAKAIQ…PFTHVKIFDP (62 aa).

The protein belongs to the CRK family. In terms of assembly, interacts with DOCK2 and EPOR. Interacts with phosphorylated CBLB and IRS4. Interacts with INPP5D/SHIP1. Interacts with BCAR1/CAS and NEDD9/HEF1. Phosphorylated on tyrosine. Phosphorylation is prominent during early development, but decreases at later embryonic stages and in newborn mice.

Its function is as follows. May mediate the transduction of intracellular signals. This chain is Crk-like protein (Crkl), found in Mus musculus (Mouse).